A 332-amino-acid chain; its full sequence is ATPase GET3 (332 aa).

32–39 (KGGVGKTT) contacts ATP. Aspartate 61 is an active-site residue. ATP-binding residues include glutamate 235 and asparagine 262. Zn(2+)-binding residues include cysteine 273 and cysteine 276.

Belongs to the arsA ATPase family. Homodimer.

The protein localises to the cytoplasm. It is found in the endoplasmic reticulum. Functionally, ATPase required for the post-translational delivery of tail-anchored (TA) proteins to the endoplasmic reticulum. Recognizes and selectively binds the transmembrane domain of TA proteins in the cytosol. This complex then targets to the endoplasmic reticulum by membrane-bound receptors, where the tail-anchored protein is released for insertion. This process is regulated by ATP binding and hydrolysis. ATP binding drives the homodimer towards the closed dimer state, facilitating recognition of newly synthesized TA membrane proteins. ATP hydrolysis is required for insertion. Subsequently, the homodimer reverts towards the open dimer state, lowering its affinity for the membrane-bound receptor, and returning it to the cytosol to initiate a new round of targeting. In Mycosarcoma maydis (Corn smut fungus), this protein is ATPase GET3.